Here is a 228-residue protein sequence, read N- to C-terminus: Urease accessory protein UreF (228 aa).

The protein belongs to the UreF family. In terms of assembly, ureD, UreF and UreG form a complex that acts as a GTP-hydrolysis-dependent molecular chaperone, activating the urease apoprotein by helping to assemble the nickel containing metallocenter of UreC. The UreE protein probably delivers the nickel.

The protein localises to the cytoplasm. Its function is as follows. Required for maturation of urease via the functional incorporation of the urease nickel metallocenter. The sequence is that of Urease accessory protein UreF from Prochlorococcus marinus subsp. pastoris (strain CCMP1986 / NIES-2087 / MED4).